The primary structure comprises 212 residues: Transmembrane emp24 domain-containing protein p24delta4 (212 aa).

The signal sequence occupies residues 1-25 (MKKKMIPTTILLSALIFSLSPICEA). Over 26 to 179 (VWLTVPHTGS…RIVSEKTNSR (154 aa)) the chain is Lumenal. A GOLD domain is found at 35–147 (SKCVSEEIQS…IEGVELEFKK (113 aa)). Asparagine 82 carries N-linked (GlcNAc...) asparagine glycosylation. Positions 133–155 (ARKEKIEGVELEFKKLEGAVEAI) form a coiled coil. Omega-N-methylated arginine is present on residues arginine 165 and arginine 170. The chain crosses the membrane as a helical span at residues 180–200 (VAWYSIMSLGICIVVSGLQIL). Over 201-212 (YLKQYFEKKKLI) the chain is Cytoplasmic. Residues 205–206 (YF) carry the COPII vesicle coat-binding motif. The COPI vesicle coat-binding motif lies at 205 to 212 (YFEKKKLI).

This sequence belongs to the EMP24/GP25L family. As to quaternary structure, probably oligomerizes with other members of the EMP24/GP25L family. Associates with the COPI vesicle coat (coatomer). Associates with the COPII vesicle coat (coatomer).

The protein resides in the endoplasmic reticulum membrane. The protein localises to the golgi apparatus membrane. Functionally, involved in vesicular protein trafficking. Mainly functions in the early secretory pathway. Required for trafficking GLL23, a component of the PYK10 complex. May act as a receptor facilitating its packing into COPII carriers and export from the endoplasmic reticulum. This chain is Transmembrane emp24 domain-containing protein p24delta4 (CYB), found in Arabidopsis thaliana (Mouse-ear cress).